The sequence spans 1181 residues: Pesticidal crystal protein Cry1Ae (1181 aa).

Belongs to the delta endotoxin family.

Its function is as follows. Promotes colloidosmotic lysis by binding to the midgut epithelial cells of many lepidopteran larvae. In Bacillus thuringiensis subsp. alesti, this protein is Pesticidal crystal protein Cry1Ae (cry1Ae).